The chain runs to 252 residues: MVFLKKLIKLKNNLKEKFKNKKIIIAYSGGIDSLLLSILLSEITETLCIFIKTPYISEWSLNNAIINAKKYNLNLKVIKIDKIIKNVPERCYLCKKMFFEILTKEKEKYNYDVVVDGTNYDDLFEDRPGLRAKEEFNIGSPFADFKIGKKDILEIAKELNINIPPKETCLLTRFEFNREISIEDLKKIEELEEFLRNYVKGAIRVRDYKNLAVIEIEDDLSKIINEKEEIIKKFKDYGFKKVCINLEIYRSY.

The protein belongs to the LarE family.

This is an uncharacterized protein from Methanocaldococcus jannaschii (strain ATCC 43067 / DSM 2661 / JAL-1 / JCM 10045 / NBRC 100440) (Methanococcus jannaschii).